A 486-amino-acid polypeptide reads, in one-letter code: Glutamyl-tRNA(Gln) amidotransferase subunit A (486 aa).

Active-site charge relay system residues include Lys-78 and Ser-153. Ser-177 functions as the Acyl-ester intermediate in the catalytic mechanism.

It belongs to the amidase family. GatA subfamily. Heterotrimer of A, B and C subunits.

It carries out the reaction L-glutamyl-tRNA(Gln) + L-glutamine + ATP + H2O = L-glutaminyl-tRNA(Gln) + L-glutamate + ADP + phosphate + H(+). Its function is as follows. Allows the formation of correctly charged Gln-tRNA(Gln) through the transamidation of misacylated Glu-tRNA(Gln) in organisms which lack glutaminyl-tRNA synthetase. The reaction takes place in the presence of glutamine and ATP through an activated gamma-phospho-Glu-tRNA(Gln). The polypeptide is Glutamyl-tRNA(Gln) amidotransferase subunit A (Desulfosudis oleivorans (strain DSM 6200 / JCM 39069 / Hxd3) (Desulfococcus oleovorans)).